We begin with the raw amino-acid sequence, 455 residues long: Chromosomal replication initiator protein DnaA (455 aa).

The domain I, interacts with DnaA modulators stretch occupies residues 1-75 (MDTNNNIEKE…EILSQNKVGM (75 aa)). The domain II stretch occupies residues 75–106 (MHLAHSVDVRIEVAPKIQINAQANINYKAIKT). Positions 107-321 (SVKDSYTFEN…GAIIKISVNA (215 aa)) are domain III, AAA+ region. The ATP site is built by Gly151, Gly153, Lys154, and Thr155. Residues 322-455 (NLMNAPIDLN…DKKTAFNSSE (134 aa)) are domain IV, binds dsDNA.

It belongs to the DnaA family. Oligomerizes as a right-handed, spiral filament on DNA at oriC.

It localises to the cytoplasm. Its function is as follows. Plays an essential role in the initiation and regulation of chromosomal replication. ATP-DnaA binds to the origin of replication (oriC) to initiate formation of the DNA replication initiation complex once per cell cycle. Binds the DnaA box (a 9 base pair repeat at the origin) and separates the double-stranded (ds)DNA. Forms a right-handed helical filament on oriC DNA; dsDNA binds to the exterior of the filament while single-stranded (ss)DNA is stabiized in the filament's interior. The ATP-DnaA-oriC complex binds and stabilizes one strand of the AT-rich DNA unwinding element (DUE), permitting loading of DNA polymerase. After initiation quickly degrades to an ADP-DnaA complex that is not apt for DNA replication. Binds acidic phospholipids. This Helicobacter pylori (strain G27) protein is Chromosomal replication initiator protein DnaA.